The primary structure comprises 392 residues: Phosphoglycerate kinase (392 aa).

Substrate-binding positions include 21–23, Arg-36, 59–62, Arg-118, and Arg-151; these read DFN and HLGR. ATP-binding positions include Lys-201, Gly-292, Glu-323, and 349 to 352; that span reads GGDS.

The protein belongs to the phosphoglycerate kinase family. Monomer.

It localises to the cytoplasm. It carries out the reaction (2R)-3-phosphoglycerate + ATP = (2R)-3-phospho-glyceroyl phosphate + ADP. It functions in the pathway carbohydrate degradation; glycolysis; pyruvate from D-glyceraldehyde 3-phosphate: step 2/5. This chain is Phosphoglycerate kinase, found in Borrelia hermsii (strain HS1 / DAH).